A 227-amino-acid chain; its full sequence is Probable cell wall protein PGA42 (227 aa).

The signal sequence occupies residues 1 to 16 (MKFIILLFALIHITVA). N-linked (GlcNAc...) asparagine glycosylation is present at N192. The GPI-anchor amidated serine moiety is linked to residue S200. The propeptide at 201–227 (GSQIFVLCVISVVGFIFFFLFFLSLFV) is removed in mature form.

This sequence belongs to the IHD1 family. In terms of processing, the GPI-anchor is attached to the protein in the endoplasmic reticulum and serves to target the protein to the cell surface. There, the glucosamine-inositol phospholipid moiety is cleaved off and the GPI-modified mannoprotein is covalently attached via its lipidless GPI glycan remnant to the 1,6-beta-glucan of the outer cell wall layer.

It is found in the secreted. It localises to the cell wall. Its subcellular location is the membrane. Probable GPI-anchored cell wall protein that may be involved in cell wall organization, hyphal growth, as well as in virulence. The sequence is that of Probable cell wall protein PGA42 (PGA42) from Candida albicans (strain SC5314 / ATCC MYA-2876) (Yeast).